The chain runs to 219 residues: Ribose-5-phosphate isomerase A (219 aa).

Substrate-binding positions include 28–31 (TGST), 81–84 (DGAD), and 94–97 (KGGG). Glutamate 103 functions as the Proton acceptor in the catalytic mechanism. Lysine 121 is a substrate binding site.

The protein belongs to the ribose 5-phosphate isomerase family. In terms of assembly, homodimer.

The enzyme catalyses aldehydo-D-ribose 5-phosphate = D-ribulose 5-phosphate. The protein operates within carbohydrate degradation; pentose phosphate pathway; D-ribose 5-phosphate from D-ribulose 5-phosphate (non-oxidative stage): step 1/1. In terms of biological role, catalyzes the reversible conversion of ribose-5-phosphate to ribulose 5-phosphate. The sequence is that of Ribose-5-phosphate isomerase A from Photobacterium profundum (strain SS9).